The chain runs to 368 residues: Lipoyl synthase, chloroplastic (368 aa).

Disordered regions lie at residues 1–30 (MQSSLARPLRPPVLAGCGGRRGHGAPRGSV) and 42–61 (PTVGTASRAPAGPYTGRDPE). The [4Fe-4S] cluster site is built by Cys-94, Cys-99, Cys-105, Cys-131, Cys-135, Cys-138, and Ser-346. The Radical SAM core domain maps to 114–335 (GEGDGIATAT…KEYGESVGFR (222 aa)).

The protein belongs to the radical SAM superfamily. Lipoyl synthase family. [4Fe-4S] cluster is required as a cofactor.

The protein resides in the plastid. It localises to the chloroplast. It catalyses the reaction [[Fe-S] cluster scaffold protein carrying a second [4Fe-4S](2+) cluster] + N(6)-octanoyl-L-lysyl-[protein] + 2 oxidized [2Fe-2S]-[ferredoxin] + 2 S-adenosyl-L-methionine + 4 H(+) = [[Fe-S] cluster scaffold protein] + N(6)-[(R)-dihydrolipoyl]-L-lysyl-[protein] + 4 Fe(3+) + 2 hydrogen sulfide + 2 5'-deoxyadenosine + 2 L-methionine + 2 reduced [2Fe-2S]-[ferredoxin]. Its pathway is protein modification; protein lipoylation via endogenous pathway; protein N(6)-(lipoyl)lysine from octanoyl-[acyl-carrier-protein]: step 2/2. Functionally, catalyzes the radical-mediated insertion of two sulfur atoms into the C-6 and C-8 positions of the octanoyl moiety bound to the lipoyl domains of lipoate-dependent enzymes, thereby converting the octanoylated domains into lipoylated derivatives. This chain is Lipoyl synthase, chloroplastic, found in Sorghum bicolor (Sorghum).